The chain runs to 430 residues: Adenylosuccinate synthetase (430 aa).

Residues 12 to 18 (GDEGKGK) and 40 to 42 (GHT) each bind GTP. Residue Asp13 is the Proton acceptor of the active site. Mg(2+) contacts are provided by Asp13 and Gly40. IMP-binding positions include 13 to 16 (DEGK), 38 to 41 (NAGH), Thr129, Arg143, Gln224, Thr239, and Arg303. His41 (proton donor) is an active-site residue. 299–305 (TVSNRKR) lines the substrate pocket. GTP contacts are provided by residues Arg305, 331–333 (KLD), and 413–415 (STG).

The protein belongs to the adenylosuccinate synthetase family. As to quaternary structure, homodimer. The cofactor is Mg(2+).

It localises to the cytoplasm. The catalysed reaction is IMP + L-aspartate + GTP = N(6)-(1,2-dicarboxyethyl)-AMP + GDP + phosphate + 2 H(+). It participates in purine metabolism; AMP biosynthesis via de novo pathway; AMP from IMP: step 1/2. Its function is as follows. Plays an important role in the de novo pathway of purine nucleotide biosynthesis. Catalyzes the first committed step in the biosynthesis of AMP from IMP. The protein is Adenylosuccinate synthetase of Ehrlichia chaffeensis (strain ATCC CRL-10679 / Arkansas).